The following is a 400-amino-acid chain: Probable cysteine desulfurase (400 aa).

Lys-219 carries the N6-(pyridoxal phosphate)lysine modification. Residue Cys-358 is the Cysteine persulfide intermediate of the active site.

This sequence belongs to the class-V pyridoxal-phosphate-dependent aminotransferase family. Csd subfamily. The cofactor is pyridoxal 5'-phosphate.

The catalysed reaction is (sulfur carrier)-H + L-cysteine = (sulfur carrier)-SH + L-alanine. Functionally, catalyzes the removal of elemental sulfur and selenium atoms from L-cysteine, L-cystine, L-selenocysteine, and L-selenocystine to produce L-alanine. The sequence is that of Probable cysteine desulfurase (csd) from Chlamydia muridarum (strain MoPn / Nigg).